The sequence spans 316 residues: L-lactate dehydrogenase (316 aa).

NAD(+) is bound by residues V15, D37, K42, Y68, and 82–83; that span reads GL. Residues Q85, R91, and 123-126 contribute to the substrate site; that span reads NPVD. NAD(+) is bound by residues 121-123 and T146; that span reads ASN. 151–154 lines the substrate pocket; the sequence is DTSR. Positions 156 and 171 each coordinate beta-D-fructose 1,6-bisphosphate. Residue H178 is the Proton acceptor of the active site. Y222 carries the post-translational modification Phosphotyrosine. Substrate is bound at residue T231.

The protein belongs to the LDH/MDH superfamily. LDH family. In terms of assembly, homotetramer.

It localises to the cytoplasm. The catalysed reaction is (S)-lactate + NAD(+) = pyruvate + NADH + H(+). The protein operates within fermentation; pyruvate fermentation to lactate; (S)-lactate from pyruvate: step 1/1. Its activity is regulated as follows. Allosterically activated by fructose 1,6-bisphosphate (FBP). Functionally, catalyzes the conversion of lactate to pyruvate. This is L-lactate dehydrogenase from Borrelia garinii subsp. bavariensis (strain ATCC BAA-2496 / DSM 23469 / PBi) (Borreliella bavariensis).